The following is a 322-amino-acid chain: uncharacterized protein (322 aa).

This sequence to M.jannaschii MJ0640 and MJ0799.

This is an uncharacterized protein from Synechocystis sp. (strain ATCC 27184 / PCC 6803 / Kazusa).